The chain runs to 711 residues: Ferric reductase transmembrane component 3 (711 aa).

An N-terminal signal peptide occupies residues 1 to 20 (MYWVLLCGSILLCCLSGASA). The Extracellular segment spans residues 21–166 (SPAKTKMYGK…YANYDIGHTY (146 aa)). N-linked (GlcNAc...) asparagine glycans are attached at residues N85, N108, N120, and N134. A helical transmembrane segment spans residues 167–187 (GGIICAYFVGVMILASILHYL). Over 188 to 237 (SYTPFKTALFKQRLVRYVRRYLTIPTIWGKHASSFSYLKIFTGFLPTRSE) the chain is Cytoplasmic. The chain crosses the membrane as a helical span at residues 238–258 (GVIILGYLVLHTVFLAYGYQY). Residues 259 to 280 (DPYNLIFDSRREQIARYVADRS) lie on the Extracellular side of the membrane. A Ferric oxidoreductase domain is found at 280–414 (SGVLAFAHFP…SGIEWIYAAI (135 aa)). The helical transmembrane segment at 281 to 301 (GVLAFAHFPLIALFAGRNNFL) threads the bilayer. The Cytoplasmic segment spans residues 302–321 (EFISGVKYTSFIMFHKWLGR). H316 and H330 together coordinate heme. Residues 322-341 (MMFLDAVIHGAAYTSYSVFY) form a helical membrane-spanning segment. The Extracellular segment spans residues 342–353 (KDWAASKEETYW). Residues 354–374 (QFGVAALCIVGVMVFFSLAMF) traverse the membrane as a helical segment. Residues 375–376 (RK) lie on the Cytoplasmic side of the membrane. Residues 377-397 (FFYEAFLFLHIVLGALFFYTC) form a helical membrane-spanning segment. H386 serves as a coordination point for heme. Residue W398 is a topological domain, extracellular. The chain crosses the membrane as a helical span at residues 399-419 (EHVVELSGIEWIYAAIAIWTI). Position 400 (H400) interacts with heme. An FAD-binding FR-type domain is found at 415 to 534 (AIWTIDRLIR…EGPYGSSSPV (120 aa)). Residues 420 to 711 (DRLIRIVRVS…IEYFEEYQSW (292 aa)) are Cytoplasmic-facing. Residue 479 to 485 (HPFTVLD) participates in FAD binding. NADP(+)-binding positions include 526 to 529 (GPYG) and 677 to 678 (CG).

This sequence belongs to the ferric reductase (FRE) family. The cofactor is FAD. Heme is required as a cofactor.

The protein localises to the cell membrane. The catalysed reaction is 2 a Fe(II)-siderophore + NADP(+) + H(+) = 2 a Fe(III)-siderophore + NADPH. Its function is as follows. Siderophore-iron reductase responsible for reducing extracellular iron prior to import. Catalyzes the reductive uptake of Fe(3+) bound to di- and trihydroxamate siderophores. Fe(3+) is reduced to Fe(2+), which then dissociates from the siderophore and can be imported by the high-affinity Fe(2+) transport complex in the plasma membrane. The chain is Ferric reductase transmembrane component 3 (FRE3) from Saccharomyces cerevisiae (strain ATCC 204508 / S288c) (Baker's yeast).